A 256-amino-acid polypeptide reads, in one-letter code: 2-C-methyl-D-erythritol 4-phosphate cytidylyltransferase (256 aa).

The protein belongs to the IspD/TarI cytidylyltransferase family. IspD subfamily.

The catalysed reaction is 2-C-methyl-D-erythritol 4-phosphate + CTP + H(+) = 4-CDP-2-C-methyl-D-erythritol + diphosphate. Its pathway is isoprenoid biosynthesis; isopentenyl diphosphate biosynthesis via DXP pathway; isopentenyl diphosphate from 1-deoxy-D-xylulose 5-phosphate: step 2/6. Catalyzes the formation of 4-diphosphocytidyl-2-C-methyl-D-erythritol from CTP and 2-C-methyl-D-erythritol 4-phosphate (MEP). The sequence is that of 2-C-methyl-D-erythritol 4-phosphate cytidylyltransferase from Corynebacterium glutamicum (strain ATCC 13032 / DSM 20300 / JCM 1318 / BCRC 11384 / CCUG 27702 / LMG 3730 / NBRC 12168 / NCIMB 10025 / NRRL B-2784 / 534).